Consider the following 828-residue polypeptide: Outer membrane usher protein MrkC (828 aa).

The first 18 residues, 1 to 18 (MKQRSICPGRLSTAIAVA), serve as a signal peptide directing secretion. Cysteine 813 and cysteine 827 are disulfide-bonded.

It belongs to the fimbrial export usher family.

It is found in the cell outer membrane. Involved in the export and assembly of the type 3 fimbrial subunit (MrkA). The chain is Outer membrane usher protein MrkC (mrkC) from Klebsiella pneumoniae.